The chain runs to 350 residues: Phosphoribosylformylglycinamidine cyclo-ligase (350 aa).

The protein belongs to the AIR synthase family.

It is found in the cytoplasm. It carries out the reaction 2-formamido-N(1)-(5-O-phospho-beta-D-ribosyl)acetamidine + ATP = 5-amino-1-(5-phospho-beta-D-ribosyl)imidazole + ADP + phosphate + H(+). It functions in the pathway purine metabolism; IMP biosynthesis via de novo pathway; 5-amino-1-(5-phospho-D-ribosyl)imidazole from N(2)-formyl-N(1)-(5-phospho-D-ribosyl)glycinamide: step 2/2. In Nitratidesulfovibrio vulgaris (strain DSM 19637 / Miyazaki F) (Desulfovibrio vulgaris), this protein is Phosphoribosylformylglycinamidine cyclo-ligase.